The sequence spans 234 residues: Probable transcriptional regulatory protein Psyr_3028 (234 aa).

The protein belongs to the TACO1 family.

It is found in the cytoplasm. In Pseudomonas syringae pv. syringae (strain B728a), this protein is Probable transcriptional regulatory protein Psyr_3028.